The chain runs to 2067 residues: Separin (2067 aa).

Disordered stretches follow at residues 51–91, 140–167, 1316–1363, and 1449–1478; these read RTAR…AQDV, KKDA…TDNE, DLEE…SVEA, and LEPK…TKAQ. Positions 55–86 are enriched in low complexity; the sequence is GTKATATNATASSRAKTTRTKSTSTSTTRTKT. 2 stretches are compositionally biased toward low complexity: residues 1333-1354 and 1449-1461; these read TRQP…ARST and LEPK…SSKS. The Peptidase C50 domain maps to 1880–1975; the sequence is RRNGTYILNP…SGTLTEAGEY (96 aa). Cysteine 1964 is a catalytic residue.

The protein localises to the nucleus. The catalysed reaction is All bonds known to be hydrolyzed by this endopeptidase have arginine in P1 and an acidic residue in P4. P6 is often occupied by an acidic residue or by a hydroxy-amino-acid residue, the phosphorylation of which enhances cleavage.. Its function is as follows. Required for nuclear division. Could function in the mitotic spindle. This Emericella nidulans (strain FGSC A4 / ATCC 38163 / CBS 112.46 / NRRL 194 / M139) (Aspergillus nidulans) protein is Separin (bimB).